Here is a 613-residue protein sequence, read N- to C-terminus: Dihydroxy-acid dehydratase 3 (613 aa).

D81 contacts Mg(2+). A [2Fe-2S] cluster-binding site is contributed by C122. 2 residues coordinate Mg(2+): D123 and K124. The residue at position 124 (K124) is an N6-carboxylysine. Residue C197 participates in [2Fe-2S] cluster binding. Residue E493 participates in Mg(2+) binding. The active-site Proton acceptor is the S519.

It belongs to the IlvD/Edd family. Homodimer. The cofactor is [2Fe-2S] cluster. Requires Mg(2+) as cofactor.

The enzyme catalyses (2R)-2,3-dihydroxy-3-methylbutanoate = 3-methyl-2-oxobutanoate + H2O. It carries out the reaction (2R,3R)-2,3-dihydroxy-3-methylpentanoate = (S)-3-methyl-2-oxopentanoate + H2O. Its pathway is amino-acid biosynthesis; L-isoleucine biosynthesis; L-isoleucine from 2-oxobutanoate: step 3/4. The protein operates within amino-acid biosynthesis; L-valine biosynthesis; L-valine from pyruvate: step 3/4. Functions in the biosynthesis of branched-chain amino acids. Catalyzes the dehydration of (2R,3R)-2,3-dihydroxy-3-methylpentanoate (2,3-dihydroxy-3-methylvalerate) into 2-oxo-3-methylpentanoate (2-oxo-3-methylvalerate) and of (2R)-2,3-dihydroxy-3-methylbutanoate (2,3-dihydroxyisovalerate) into 2-oxo-3-methylbutanoate (2-oxoisovalerate), the penultimate precursor to L-isoleucine and L-valine, respectively. The sequence is that of Dihydroxy-acid dehydratase 3 from Nocardia farcinica (strain IFM 10152).